The following is a 383-amino-acid chain: Erythronate-4-phosphate dehydrogenase (383 aa).

Substrate-binding residues include S45 and T66. Residues D146, T174, 205 to 207 (ASR), and D231 contribute to the NAD(+) site. Residue R207 is part of the active site. Residue E236 is part of the active site. H253 functions as the Proton donor in the catalytic mechanism. G256 is an NAD(+) binding site. Y257 provides a ligand contact to substrate.

Belongs to the D-isomer specific 2-hydroxyacid dehydrogenase family. PdxB subfamily. As to quaternary structure, homodimer.

It is found in the cytoplasm. The enzyme catalyses 4-phospho-D-erythronate + NAD(+) = (R)-3-hydroxy-2-oxo-4-phosphooxybutanoate + NADH + H(+). It functions in the pathway cofactor biosynthesis; pyridoxine 5'-phosphate biosynthesis; pyridoxine 5'-phosphate from D-erythrose 4-phosphate: step 2/5. Functionally, catalyzes the oxidation of erythronate-4-phosphate to 3-hydroxy-2-oxo-4-phosphonooxybutanoate. This chain is Erythronate-4-phosphate dehydrogenase, found in Pseudomonas entomophila (strain L48).